Here is a 311-residue protein sequence, read N- to C-terminus: HTH-type transcriptional regulator PcaQ (311 aa).

An HTH lysR-type domain is found at 6–63 (IKFRHLQTFVEVARQKSVIRAAEILHVSQPAVTKTIRELEDVLGVSLLEREGRGIRIS). The H-T-H motif DNA-binding region spans 23-42 (VIRAAEILHVSQPAVTKTIR).

The protein belongs to the LysR transcriptional regulatory family.

Functionally, activates transcription of the pcaDCHGB operon for the catabolism of the phenolic compound protocatechuate. The chain is HTH-type transcriptional regulator PcaQ (pcaQ) from Agrobacterium fabrum (strain C58 / ATCC 33970) (Agrobacterium tumefaciens (strain C58)).